The primary structure comprises 463 residues: MSLIVTRFAPSPTGYLHIGGLRTAIFNYLFARANQGKFFLRIEDTDLSRNSIEAANAIIEAFKWVGLEHDGEILYQSKRFGIYKEYIQKLLDEDKAYYCYMSKDELDALREEQKARKETPRYDNRYRDFKGTPPKGIEPVVRIKVPQNEIIGFNDGVKGEVKVNTNELDDFIIARSDGTPTYNFVVTIDDALMGITDVIRGDDHLSNTPKQIVLYKALNFKIPNFFHVPMILNEEGQKLSKRHGATNVMDYQEMGYLKEALVNFLARLGWSCHDKEVFSMQELLKWFDPKDLNSSPSCFSWHKLNWLNAHYLKNQSAQRLLELLKPFNFSDLSHLNPTQLDRLLDALKERSQTLKELALKIDEVLIAPVEYEEKVFKKLNQALVMPLLEKFKLELNKANFNDESVLENAMHKIIEEEKIKAGSFMQPLRLALLGKGGGIGLKEALFILGKTESVKRIEEFLKN.

Residues P10 to G20 carry the 'HIGH' region motif. The 'KMSKS' region signature appears at K238–R242. K241 contributes to the ATP binding site.

This sequence belongs to the class-I aminoacyl-tRNA synthetase family. Glutamate--tRNA ligase type 1 subfamily. As to quaternary structure, monomer.

The protein resides in the cytoplasm. It carries out the reaction tRNA(Glu) + L-glutamate + ATP = L-glutamyl-tRNA(Glu) + AMP + diphosphate. Functionally, catalyzes the attachment of glutamate to tRNA(Glu) in a two-step reaction: glutamate is first activated by ATP to form Glu-AMP and then transferred to the acceptor end of tRNA(Glu). The polypeptide is Glutamate--tRNA ligase 1 (Helicobacter pylori (strain Shi470)).